A 524-amino-acid chain; its full sequence is Methylmalonyl-CoA carboxyltransferase 12S subunit (524 aa).

Positions 13–268 constitute a CoA carboxyltransferase N-terminal domain; that stretch reads MEGRVEQLAE…NNTEEASFVN (256 aa). A carboxyltransferase region spans residues 13–506; the sequence is MEGRVEQLAE…RRKIASALEM (494 aa). One can recognise a CoA carboxyltransferase C-terminal domain in the interval 274–506; sequence SPNTELRDIV…RRKIASALEM (233 aa).

In terms of assembly, homohexamer. Transcarboxylase is composed of three subunits: 1.3S, 5S, and 12S. The core of the enzyme is composed of six 12S subunits. On each side of the core there are three pairs of 5S subunits. Each 5S dimer is attached to the core by two 1.3S subunits. Thus the total number of chains is 30 (6 + 12 + 12).

It catalyses the reaction (S)-methylmalonyl-CoA + pyruvate = propanoyl-CoA + oxaloacetate. Functionally, the 12S subunit specifically catalyzes the transfer of the carboxyl group of methylmalonyl CoA to the biotin of the 1.3S subunit forming propanoyl-CoA and carboxylated 1.3S-biotin. The chain is Methylmalonyl-CoA carboxyltransferase 12S subunit from Propionibacterium freudenreichii subsp. shermanii.